The sequence spans 203 residues: ATP-dependent Clp protease proteolytic subunit (203 aa).

The active-site Nucleophile is the Ser-107. Residue His-132 is part of the active site.

It belongs to the peptidase S14 family. Fourteen ClpP subunits assemble into 2 heptameric rings which stack back to back to give a disk-like structure with a central cavity, resembling the structure of eukaryotic proteasomes.

It localises to the cytoplasm. It carries out the reaction Hydrolysis of proteins to small peptides in the presence of ATP and magnesium. alpha-casein is the usual test substrate. In the absence of ATP, only oligopeptides shorter than five residues are hydrolyzed (such as succinyl-Leu-Tyr-|-NHMec, and Leu-Tyr-Leu-|-Tyr-Trp, in which cleavage of the -Tyr-|-Leu- and -Tyr-|-Trp bonds also occurs).. Functionally, cleaves peptides in various proteins in a process that requires ATP hydrolysis. Has a chymotrypsin-like activity. Plays a major role in the degradation of misfolded proteins. In Shewanella loihica (strain ATCC BAA-1088 / PV-4), this protein is ATP-dependent Clp protease proteolytic subunit.